A 231-amino-acid chain; its full sequence is LexA repressor (231 aa).

The H-T-H motif DNA-binding region spans 26–46; sequence FEEMKEALDLKSKSGIHRLIG. Residues serine 152 and lysine 190 each act as for autocatalytic cleavage activity in the active site.

The protein belongs to the peptidase S24 family. Homodimer.

The catalysed reaction is Hydrolysis of Ala-|-Gly bond in repressor LexA.. Represses a number of genes involved in the response to DNA damage (SOS response), including recA and lexA. In the presence of single-stranded DNA, RecA interacts with LexA causing an autocatalytic cleavage which disrupts the DNA-binding part of LexA, leading to derepression of the SOS regulon and eventually DNA repair. In Acidiphilium cryptum (strain JF-5), this protein is LexA repressor.